The primary structure comprises 183 residues: Large ribosomal subunit protein uL5 (183 aa).

Belongs to the universal ribosomal protein uL5 family. As to quaternary structure, part of the 50S ribosomal subunit; part of the 5S rRNA/L5/L18/L25 subcomplex. Contacts the 5S rRNA and the P site tRNA. Forms a bridge to the 30S subunit in the 70S ribosome.

Functionally, this is one of the proteins that bind and probably mediate the attachment of the 5S RNA into the large ribosomal subunit, where it forms part of the central protuberance. In the 70S ribosome it contacts protein S13 of the 30S subunit (bridge B1b), connecting the 2 subunits; this bridge is implicated in subunit movement. Contacts the P site tRNA; the 5S rRNA and some of its associated proteins might help stabilize positioning of ribosome-bound tRNAs. The sequence is that of Large ribosomal subunit protein uL5 from Christiangramia forsetii (strain DSM 17595 / CGMCC 1.15422 / KT0803) (Gramella forsetii).